We begin with the raw amino-acid sequence, 350 residues long: Protein RecA (350 aa).

65-72 (GPESSGKT) lines the ATP pocket.

It belongs to the RecA family.

The protein resides in the cytoplasm. Its function is as follows. Can catalyze the hydrolysis of ATP in the presence of single-stranded DNA, the ATP-dependent uptake of single-stranded DNA by duplex DNA, and the ATP-dependent hybridization of homologous single-stranded DNAs. It interacts with LexA causing its activation and leading to its autocatalytic cleavage. The sequence is that of Protein RecA from Nautilia profundicola (strain ATCC BAA-1463 / DSM 18972 / AmH).